The primary structure comprises 337 residues: Transcription initiation factor IIB (337 aa).

A TFIIB-type zinc finger spans residues 37 to 68 (YTVECPECGSRALVRDYERAELVCSECGLVID). The Zn(2+) site is built by cysteine 41, cysteine 44, cysteine 60, and cysteine 63. 2 repeat units span residues 154–237 (SELD…SREL) and 248–329 (DYIP…ELAE).

Belongs to the TFIIB family.

In terms of biological role, stabilizes TBP binding to an archaeal box-A promoter. Also responsible for recruiting RNA polymerase II to the pre-initiation complex (DNA-TBP-TFIIB). The chain is Transcription initiation factor IIB from Methanothrix thermoacetophila (strain DSM 6194 / JCM 14653 / NBRC 101360 / PT) (Methanosaeta thermophila).